Consider the following 356-residue polypeptide: Naringenin,2-oxoglutarate 3-dioxygenase (356 aa).

A Fe2OG dioxygenase domain is found at 188 to 292 (CVDMDQKVVV…RLSIATFQNP (105 aa)). Fe cation is bound by residues His215, Asp217, and His273. Arg283 serves as a coordination point for 2-oxoglutarate.

Belongs to the iron/ascorbate-dependent oxidoreductase family. The cofactor is Fe(2+). L-ascorbate serves as cofactor.

The enzyme catalyses a (2S)-flavan-4-one + 2-oxoglutarate + O2 = a (2R,3R)-dihydroflavonol + succinate + CO2. Its pathway is secondary metabolite biosynthesis; flavonoid biosynthesis. Its function is as follows. Catalyzes the 3-beta-hydroxylation of 2S-flavanones to 2R,3R-dihydroflavonols which are intermediates in the biosynthesis of flavonols, anthocyanidins, catechins and proanthocyanidins in plants. The chain is Naringenin,2-oxoglutarate 3-dioxygenase (FHT) from Callistephus chinensis (China aster).